Consider the following 353-residue polypeptide: Phospho-furanose lactonase (353 aa).

His25, His27, Lys153, His186, and His214 together coordinate Zn(2+). The residue at position 153 (Lys153) is an N6-carboxylysine. Position 244–245 (244–245) interacts with substrate; that stretch reads KY. Position 272 (Asp272) interacts with Zn(2+). Position 275 to 278 (275 to 278) interacts with substrate; that stretch reads RILY.

The protein belongs to the metallo-dependent hydrolases superfamily. Phosphotriesterase family. Zn(2+) serves as cofactor.

The catalysed reaction is a 1,4-lactone + H2O = a 4-hydroxyacid + H(+). It carries out the reaction D-xylono-1,4-lactone 5-phosphate + H2O = 5-phospho-D-xylonate + H(+). The enzyme catalyses L-arabino-1,4-lactone 5-phosphate + H2O = 5-phospho-L-arabinonate + H(+). Its function is as follows. Catalyzes the hydrolysis of D-xylono-1,4-lactone-5-phosphate and L-arabino-1,4-lactone-5-phosphate. Also able to hydrolyze carboxy 1,4-lactones. The sequence is that of Phospho-furanose lactonase from Mycoplasmopsis agalactiae (strain NCTC 10123 / CIP 59.7 / PG2) (Mycoplasma agalactiae).